A 417-amino-acid polypeptide reads, in one-letter code: Gelsolin (417 aa).

One copy of the Gelsolin-like 4 repeat lies at 93-171; sequence KVPVLESHYG…VVQGKEPAHL (79 aa). Ca(2+) contacts are provided by glycine 107, aspartate 108, glutamate 138, aspartate 150, glycine 155, proline 157, threonine 187, asparagine 227, aspartate 228, glutamate 250, aspartate 331, aspartate 332, and glutamate 354. Gelsolin-like repeat units follow at residues 213–261 and 316–392; these read RAVE…LKIL and IEEV…PTFI.

Belongs to the villin/gelsolin family.

Its subcellular location is the cytoplasm. The protein resides in the cytoskeleton. Functionally, calcium-regulated, actin-modulating protein that binds to the plus (or barbed) ends of actin monomers or filaments, preventing monomer exchange (end-blocking or capping). It can promote the assembly of monomers into filaments (nucleation) as well as sever filaments already formed. Plays a role in ciliogenesis. The sequence is that of Gelsolin (gsn) from Xenopus laevis (African clawed frog).